A 247-amino-acid polypeptide reads, in one-letter code: Adenosylcobinamide-GDP ribazoletransferase (247 aa).

Transmembrane regions (helical) follow at residues Ile-31–Ile-51, Leu-55–Leu-75, Ile-109–Ile-129, Leu-135–Thr-155, Val-183–Ile-203, and Ala-227–Val-247.

It belongs to the CobS family. Requires Mg(2+) as cofactor.

Its subcellular location is the cell inner membrane. It catalyses the reaction alpha-ribazole + adenosylcob(III)inamide-GDP = adenosylcob(III)alamin + GMP + H(+). The catalysed reaction is alpha-ribazole 5'-phosphate + adenosylcob(III)inamide-GDP = adenosylcob(III)alamin 5'-phosphate + GMP + H(+). The protein operates within cofactor biosynthesis; adenosylcobalamin biosynthesis; adenosylcobalamin from cob(II)yrinate a,c-diamide: step 7/7. Its function is as follows. Joins adenosylcobinamide-GDP and alpha-ribazole to generate adenosylcobalamin (Ado-cobalamin). Also synthesizes adenosylcobalamin 5'-phosphate from adenosylcobinamide-GDP and alpha-ribazole 5'-phosphate. This Acinetobacter baumannii (strain ATCC 17978 / DSM 105126 / CIP 53.77 / LMG 1025 / NCDC KC755 / 5377) protein is Adenosylcobinamide-GDP ribazoletransferase.